The following is a 179-amino-acid chain: Calcineurin subunit B type 2 (179 aa).

Residue glycine 2 is the site of N-myristoyl glycine attachment. EF-hand domains are found at residues 18 to 53 (EEIRRLGKSFRKLDLDKSGSLSIEEFMRLPELQQNP), 57 to 85 (RVIDIFDTDGNGEVDFHEFIVGTSQFSVK), 87 to 122 (DEEQKLRFAFRIYDMDNDGFISNGELFQVLKMMVGN), and 128 to 163 (QLQQLVDKSILVLDKDGDGRISFEEFSDVVKTMEIH). Ca(2+) is bound by residues aspartate 31, aspartate 33, serine 35, serine 37, glutamate 42, aspartate 63, aspartate 65, asparagine 67, glutamate 69, glutamate 74, aspartate 100, aspartate 102, aspartate 104, and glutamate 111. The segment at 131 to 136 (QLVDKS) is calcineurin A binding. The Ca(2+) site is built by aspartate 141, aspartate 143, aspartate 145, arginine 147, and glutamate 152.

It belongs to the calcineurin regulatory subunit family. Forms a complex composed of a calmodulin-dependent catalytic subunit (also known as calcineurin A) and a regulatory Ca(2+)-binding subunit (also known as calcineurin B). There are three catalytic subunits, each encoded by a separate gene (PPP3CA, PPP3CB, and PPP3CC) and two regulatory subunits which are also encoded by separate genes (PPP3R1 and PPP3R2). Interacts with SPATA33 (via PQIIIT motif). Expressed in osteoblasts and bone marrow (at protein level). Expressed in the testis. Expressed in the sperm midpiece in a SPATA33-dependent manner (at protein level).

The protein resides in the mitochondrion. In terms of biological role, regulatory subunit of calcineurin, a calcium-dependent, calmodulin stimulated protein phosphatase. Confers calcium sensitivity. The sequence is that of Calcineurin subunit B type 2 (Ppp3r2) from Mus musculus (Mouse).